Here is a 118-residue protein sequence, read N- to C-terminus: Non-specific lipid-transfer protein 2 (118 aa).

An N-terminal signal peptide occupies residues 1 to 25 (MARGMKLACVVLVICMVVIAPMAEG). Cystine bridges form between cysteine 29–cysteine 76, cysteine 39–cysteine 53, cysteine 54–cysteine 99, and cysteine 74–cysteine 113.

Belongs to the plant LTP family.

Plant non-specific lipid-transfer proteins transfer phospholipids as well as galactolipids across membranes. May play a role in wax or cutin deposition in the cell walls of expanding epidermal cells and certain secretory tissues. Binds saturated fatty acids, jasmonic acid and, with highest efficiency, unsaturated fatty acids and lysolipids. This is Non-specific lipid-transfer protein 2 from Lens culinaris (Lentil).